Consider the following 342-residue polypeptide: Fructose-1,6-bisphosphatase class 1 (342 aa).

Residues E91, D113, L115, and D116 each contribute to the Mg(2+) site. Residues 116 to 119, N211, and K277 contribute to the substrate site; that span reads DGSS. E283 serves as a coordination point for Mg(2+).

Belongs to the FBPase class 1 family. As to quaternary structure, homotetramer. Mg(2+) is required as a cofactor.

Its subcellular location is the cytoplasm. It catalyses the reaction beta-D-fructose 1,6-bisphosphate + H2O = beta-D-fructose 6-phosphate + phosphate. The protein operates within carbohydrate biosynthesis; gluconeogenesis. The chain is Fructose-1,6-bisphosphatase class 1 from Bordetella petrii (strain ATCC BAA-461 / DSM 12804 / CCUG 43448).